A 286-amino-acid chain; its full sequence is Shikimate dehydrogenase (NADP(+)) (286 aa).

Shikimate is bound by residues 22–24 and T71; that span reads SRS. The Proton acceptor role is filled by K75. Residue E87 coordinates NADP(+). N96 and D111 together coordinate shikimate. Residues 136 to 140, 160 to 165, and I225 each bind NADP(+); these read GAGGA and NRTAAR. Shikimate is bound at residue Y227. An NADP(+)-binding site is contributed by G248.

It belongs to the shikimate dehydrogenase family. Homodimer.

The catalysed reaction is shikimate + NADP(+) = 3-dehydroshikimate + NADPH + H(+). The protein operates within metabolic intermediate biosynthesis; chorismate biosynthesis; chorismate from D-erythrose 4-phosphate and phosphoenolpyruvate: step 4/7. In terms of biological role, involved in the biosynthesis of the chorismate, which leads to the biosynthesis of aromatic amino acids. Catalyzes the reversible NADPH linked reduction of 3-dehydroshikimate (DHSA) to yield shikimate (SA). The chain is Shikimate dehydrogenase (NADP(+)) from Sinorhizobium fredii (strain NBRC 101917 / NGR234).